A 592-amino-acid chain; its full sequence is Aspartate--tRNA ligase (592 aa).

Glu176 contributes to the L-aspartate binding site. Positions 200–203 are aspartate; that stretch reads QIFK. Arg222 is an L-aspartate binding site. ATP is bound by residues 222-224 and Gln231; that span reads RDE. His450 contacts L-aspartate. ATP is bound at residue Glu484. Arg491 contacts L-aspartate. An ATP-binding site is contributed by 536 to 539; the sequence is GLDR.

Belongs to the class-II aminoacyl-tRNA synthetase family. Type 1 subfamily. Homodimer.

The protein localises to the cytoplasm. The catalysed reaction is tRNA(Asp) + L-aspartate + ATP = L-aspartyl-tRNA(Asp) + AMP + diphosphate. Functionally, catalyzes the attachment of L-aspartate to tRNA(Asp) in a two-step reaction: L-aspartate is first activated by ATP to form Asp-AMP and then transferred to the acceptor end of tRNA(Asp). This is Aspartate--tRNA ligase from Macrococcus caseolyticus (strain JCSC5402) (Macrococcoides caseolyticum).